A 400-amino-acid chain; its full sequence is Aspartate/prephenate aminotransferase (400 aa).

L-aspartate contacts are provided by glycine 39, tryptophan 125, and asparagine 175. The residue at position 239 (lysine 239) is an N6-(pyridoxal phosphate)lysine. Arginine 375 serves as a coordination point for L-aspartate.

It belongs to the class-I pyridoxal-phosphate-dependent aminotransferase family. Homodimer. Pyridoxal 5'-phosphate is required as a cofactor.

It localises to the cytoplasm. It carries out the reaction L-aspartate + 2-oxoglutarate = oxaloacetate + L-glutamate. It catalyses the reaction L-arogenate + 2-oxoglutarate = prephenate + L-glutamate. Catalyzes the reversible conversion of aspartate and 2-oxoglutarate to glutamate and oxaloacetate. Can also transaminate prephenate in the presence of glutamate. The protein is Aspartate/prephenate aminotransferase of Cereibacter sphaeroides (strain ATCC 17029 / ATH 2.4.9) (Rhodobacter sphaeroides).